The sequence spans 138 residues: ATP synthase epsilon chain (138 aa).

Belongs to the ATPase epsilon chain family. As to quaternary structure, F-type ATPases have 2 components, CF(1) - the catalytic core - and CF(0) - the membrane proton channel. CF(1) has five subunits: alpha(3), beta(3), gamma(1), delta(1), epsilon(1). CF(0) has three main subunits: a, b and c.

The protein localises to the cell membrane. Functionally, produces ATP from ADP in the presence of a proton gradient across the membrane. This Streptococcus suis (strain 98HAH33) protein is ATP synthase epsilon chain.